A 775-amino-acid chain; its full sequence is Phosphoribosylformylglycinamidine synthase subunit PurL (775 aa).

H81 is a catalytic residue. Residues Y84 and K123 each coordinate ATP. Residue E125 coordinates Mg(2+). Substrate-binding positions include 126–129 (SHNH) and R148. H127 serves as the catalytic Proton acceptor. Residue D149 participates in Mg(2+) binding. Q272 provides a ligand contact to substrate. Position 300 (D300) interacts with Mg(2+). 344–346 (ESQ) contributes to the substrate binding site. ATP-binding residues include D525 and G562. N563 lines the Mg(2+) pocket. Residue S565 coordinates substrate.

Belongs to the FGAMS family. In terms of assembly, monomer. Part of the FGAM synthase complex composed of 1 PurL, 1 PurQ and 2 PurS subunits.

The protein resides in the cytoplasm. It catalyses the reaction N(2)-formyl-N(1)-(5-phospho-beta-D-ribosyl)glycinamide + L-glutamine + ATP + H2O = 2-formamido-N(1)-(5-O-phospho-beta-D-ribosyl)acetamidine + L-glutamate + ADP + phosphate + H(+). It functions in the pathway purine metabolism; IMP biosynthesis via de novo pathway; 5-amino-1-(5-phospho-D-ribosyl)imidazole from N(2)-formyl-N(1)-(5-phospho-D-ribosyl)glycinamide: step 1/2. Functionally, part of the phosphoribosylformylglycinamidine synthase complex involved in the purines biosynthetic pathway. Catalyzes the ATP-dependent conversion of formylglycinamide ribonucleotide (FGAR) and glutamine to yield formylglycinamidine ribonucleotide (FGAM) and glutamate. The FGAM synthase complex is composed of three subunits. PurQ produces an ammonia molecule by converting glutamine to glutamate. PurL transfers the ammonia molecule to FGAR to form FGAM in an ATP-dependent manner. PurS interacts with PurQ and PurL and is thought to assist in the transfer of the ammonia molecule from PurQ to PurL. The sequence is that of Phosphoribosylformylglycinamidine synthase subunit PurL from Agrobacterium fabrum (strain C58 / ATCC 33970) (Agrobacterium tumefaciens (strain C58)).